A 73-amino-acid chain; its full sequence is Large ribosomal subunit protein bL31 (73 aa).

Zn(2+) is bound by residues C16, C18, C36, and C39.

Belongs to the bacterial ribosomal protein bL31 family. Type A subfamily. As to quaternary structure, part of the 50S ribosomal subunit. It depends on Zn(2+) as a cofactor.

Functionally, binds the 23S rRNA. This chain is Large ribosomal subunit protein bL31, found in Desulfosudis oleivorans (strain DSM 6200 / JCM 39069 / Hxd3) (Desulfococcus oleovorans).